The primary structure comprises 376 residues: Alanine racemase (376 aa).

Catalysis depends on K40, which acts as the Proton acceptor; specific for D-alanine. K40 bears the N6-(pyridoxal phosphate)lysine mark. R138 contributes to the substrate binding site. The active-site Proton acceptor; specific for L-alanine is Y270. Residue M317 coordinates substrate.

It belongs to the alanine racemase family. It depends on pyridoxal 5'-phosphate as a cofactor.

It carries out the reaction L-alanine = D-alanine. It participates in amino-acid biosynthesis; D-alanine biosynthesis; D-alanine from L-alanine: step 1/1. Its function is as follows. Catalyzes the interconversion of L-alanine and D-alanine. May also act on other amino acids. This chain is Alanine racemase (alr), found in Lactobacillus delbrueckii subsp. bulgaricus (strain ATCC BAA-365 / Lb-18).